Reading from the N-terminus, the 275-residue chain is 2-dehydro-3-deoxyphosphooctonate aldolase (275 aa).

The protein belongs to the KdsA family.

It localises to the cytoplasm. The catalysed reaction is D-arabinose 5-phosphate + phosphoenolpyruvate + H2O = 3-deoxy-alpha-D-manno-2-octulosonate-8-phosphate + phosphate. It functions in the pathway carbohydrate biosynthesis; 3-deoxy-D-manno-octulosonate biosynthesis; 3-deoxy-D-manno-octulosonate from D-ribulose 5-phosphate: step 2/3. Its pathway is bacterial outer membrane biogenesis; lipopolysaccharide biosynthesis. This chain is 2-dehydro-3-deoxyphosphooctonate aldolase, found in Francisella tularensis subsp. holarctica (strain LVS).